Here is a 339-residue protein sequence, read N- to C-terminus: Biotin synthase (339 aa).

The Radical SAM core domain occupies 47-276 (FYGKKVKLNM…SKEIRISGGR (230 aa)). [4Fe-4S] cluster-binding residues include Cys65, Cys69, and Cys72. [2Fe-2S] cluster contacts are provided by Cys109, Cys141, Cys201, and Arg271.

Belongs to the radical SAM superfamily. Biotin synthase family. As to quaternary structure, homodimer. [4Fe-4S] cluster is required as a cofactor. Requires [2Fe-2S] cluster as cofactor.

The enzyme catalyses (4R,5S)-dethiobiotin + (sulfur carrier)-SH + 2 reduced [2Fe-2S]-[ferredoxin] + 2 S-adenosyl-L-methionine = (sulfur carrier)-H + biotin + 2 5'-deoxyadenosine + 2 L-methionine + 2 oxidized [2Fe-2S]-[ferredoxin]. The protein operates within cofactor biosynthesis; biotin biosynthesis; biotin from 7,8-diaminononanoate: step 2/2. In terms of biological role, catalyzes the conversion of dethiobiotin (DTB) to biotin by the insertion of a sulfur atom into dethiobiotin via a radical-based mechanism. The protein is Biotin synthase of Bacillus velezensis (strain DSM 23117 / BGSC 10A6 / LMG 26770 / FZB42) (Bacillus amyloliquefaciens subsp. plantarum).